A 347-amino-acid chain; its full sequence is Endo-1,4-beta-xylanase 3 (347 aa).

The N-terminal stretch at 1-16 is a signal peptide; it reads MKANVILCLLAPLVAA. The propeptide occupies 17–45; that stretch reads LPTETIHLDPELAALRANLTERTADLWDR. Residue Gln46 is modified to Pyrrolidone carboxylic acid. One can recognise a GH10 domain in the interval 46–345; the sequence is QASQSIDQLI…KPAYNSIVGI (300 aa). Glu176 functions as the Proton donor in the catalytic mechanism. Glu282 functions as the Nucleophile in the catalytic mechanism. Cys300 and Cys306 are joined by a disulfide.

This sequence belongs to the glycosyl hydrolase 10 (cellulase F) family. In terms of assembly, monomer. In terms of processing, not glycosylated.

Its subcellular location is the secreted. The enzyme catalyses Endohydrolysis of (1-&gt;4)-beta-D-xylosidic linkages in xylans.. The protein operates within glycan degradation; xylan degradation. Functionally, glycoside hydrolase involved in the hydrolysis of xylan, a major plant cell wall hemicellulose made up of 1,4-beta-linked D-xylopyranose residues. Catalyzes the endohydrolysis of the main-chain 1,4-beta-glycosidic bonds connecting the xylose subunits yielding various xylooligosaccharides and xylose. Produces xylobiose and xylotriose as the main degradation products. This chain is Endo-1,4-beta-xylanase 3 (xyn3), found in Hypocrea jecorina (strain QM6a) (Trichoderma reesei).